Here is a 157-residue protein sequence, read N- to C-terminus: Protein FAM162B (157 aa).

Residues 104 to 123 form a helical membrane-spanning segment; that stretch reads ACYIMIGLTIVACFAVIVSA.

The protein belongs to the UPF0389 family.

Its subcellular location is the membrane. The protein is Protein FAM162B (Fam162b) of Mus musculus (Mouse).